Here is a 303-residue protein sequence, read N- to C-terminus: MPPPRGTPNILEGPGDYDVTSTIHNDTYPAIDPLKADLSGKAVFITGGSKGLGRAMVLSFAKAGASYIAAGARSDMTELAKDVAAAAATAKRSPPKFLPIQLDVTDPQSVENAAVAVKSEFGRCDVVVNNAGVLGRFGGILQTDPQEWWQVLGVNLRGPYLVSRAFLPLLLESELKALVHVTSVAAHLLNPTLSAYQTSKMALLKFSQLVHAEFGSKGLVTFAVHPGNCPTDIMGGPDGLSEHEKLIFVETPEISADTIVYLTSEKRDWLGGRYINVTWDMPELIAMKDEIVQGDKLKVKFIY.

I45, D103, N130, R164, Y196, K200, and T231 together coordinate NADP(+). Residue Y196 is the Proton donor of the active site. Catalysis depends on K200, which acts as the Lowers pKa of active site Tyr.

This sequence belongs to the short-chain dehydrogenases/reductases (SDR) family.

The protein operates within secondary metabolite biosynthesis. Functionally, short chain dehydrogenase; part of the gene cluster that mediates the biosynthesis of azaphilone pigments (MonAzPs), a complex mixture of compounds with a common azaphilone skeleton very widely used as food colorants. Within the pathway, pigC intercepts the very reactive benzaldehyde produced by the nrPKS pigA to reduce the omega-1 carbonyl to the alcohol to provide the first stable enzyme-free MonAzPs intermediate, 6-(4-hydroxy-2-oxopentyl)-3-methyl-2,4-dioxocyclohexane carbaldehyde, also known as M7PKS-1. The first step of the pathway is performed by the nrPKS pigA that forms the hexaketide precursor from successive condensations of five malonyl-CoA units, with a simple acetyl-CoA starter unit. The role of esterase pigG is not clear, but it may play at most a supplementary role in the formation of the benzaldehyde produced by the pigA nrPKS. This very reactive benzaldehyde is intercepted by the pigC ketoreductase that to provide the first stable enzyme-free MonAzPs intermediate, M7PKS-1. The FAD-dependent monooxygenase pigN hydroxylates M7PKS-1 at C-4, which triggers the formation of the pyran ring. PigJ, pigK and pigD are involved in the acetylation of the pyran ring. PigJ and pigK form the two subunits of a dedicated fungal FAS that produces the side chain fatty acyl moiety of MonAzPs and pigD transfers the fatty acyl chain to the C-4 alcohol. PigM and pigO are involved in the elimination of the omega-1 alcohol. PigM acts as an O-acetyltransferase that synthesizes the putative O-11 acetyl intermediate whereas pigO eliminates acetic acid to yield an intermediate with a C10(11) double bond. The dehydration of the C-11 alcohol followed by the reduction of the C6(7) double bond by the NAD(P)H-dependent oxidoreductase pigE increases the electrophilicity of the C-5 ketone of the resulting acyl benzopyran. This in turn sets up the C-5 ketone for an intramolecular Knoevenagel aldol condensation with the C-20 enol of the side chain. This condensation affords the characteristic linear tricyclic carbon skeletons of the yellow pigments that serve as the common precursors for the classical yellow pigments monascin and ankaflavin, orange pigments rubopunctatin and monascorubrin, and red pigments ribropunctamine and monascorubramine. The FAD-dependent oxidoreductase pigF is especially invoved in the biosynthesis of orange and red pigments via desaturation of C6(7). This is Short chain dehydrogenase pigC from Monascus ruber (Mold).